The chain runs to 257 residues: Gamma-secretase subunit APH-1B (257 aa).

A run of 7 helical transmembrane segments spans residues 5 to 25, 32 to 52, 66 to 86, 115 to 135, 160 to 180, 186 to 206, and 213 to 233; these read VFFG…VFTI, VIFL…SSVF, PVQN…QELF, LLAY…SFVN, AFMT…FFDG, WYTL…TFLS, and LVTA…VAGG.

The protein belongs to the APH-1 family. Probable component of the gamma-secretase complex, a complex composed of a presenilin homodimer (PSEN1 or PSEN2), nicastrin (NCSTN), APH1 (APH1A or APH1B) and PEN2. Such minimal complex is sufficient for secretase activity, although other components may exist. Interacts with PSEN1 and PSEN2.

Its subcellular location is the membrane. Probable subunit of the gamma-secretase complex, an endoprotease complex that catalyzes the intramembrane cleavage of integral proteins such as Notch receptors and APP (amyloid-beta precursor protein). It probably represents a stabilizing cofactor for the presenilin homodimer that promotes the formation of a stable complex. Probably present in a minority of gamma-secretase complexes compared to APH1A. The sequence is that of Gamma-secretase subunit APH-1B (Aph1b) from Mus musculus (Mouse).